The following is a 530-amino-acid chain: Plexin domain-containing protein 2 (530 aa).

A signal peptide spans 1–30; that stretch reads MARFRRADLAAAGVMLLCHFLTDRFQFAHG. At 31–455 the chain is on the extracellular side; that stretch reads EPGHHTNDWI…AEKKGGTLHA (425 aa). N-linked (GlcNAc...) asparagine glycosylation is found at asparagine 103 and asparagine 160. Positions 327-372 constitute a PSI domain; the sequence is TCLQFNGCGPCVSSQIGFNCSWCSKLQRCSSGFDRHRQDWVDSGCP. The segment covering 378 to 387 has biased composition (basic and acidic residues); the sequence is KEKMCEKTEP. A disordered region spans residues 378-399; it reads KEKMCEKTEPGETSQTTTTSHT. A compositionally biased stretch (low complexity) spans 390 to 399; the sequence is TSQTTTTSHT. Residues 456–476 traverse the membrane as a helical segment; it reads GLIVGILILVLIIAAAILVTV. The Cytoplasmic portion of the chain corresponds to 477–530; the sequence is YMYHHPTSAASIFFIERRPSRWPAMKFRRGSGHPAYAEVEPVGEKEGFIVSEQC. A Phosphoserine modification is found at serine 507.

This sequence belongs to the plexin family. Interacts with CTTN. As to expression, expressed in tumor endothelium and in vessels of some normal tissues, such as the muscle and lung.

The protein resides in the membrane. In terms of biological role, may play a role in tumor angiogenesis. This chain is Plexin domain-containing protein 2 (Plxdc2), found in Mus musculus (Mouse).